The primary structure comprises 564 residues: MHPDQADTAAMQQQTTTECSDRSRPEKAEEGHAREHTVTRTCSREPEQTATATKPTGLKLICLTTAICLTIFLISVDFSILATAIPAITAEFKSVADIGWYGSSYLLTTASSQLLLGKCYTVFDLKWTFLLALLTFEVGSIICATAPSSVVLIIGRAIAGCGNAGLLSGALLILTHSVPLEKRPLFMAMTGGTYGVAAIAGPPLGGVFTDKLSWRWCFWINLPIGALTFLVIVFLFKSPPRSGFDGSRSWLAKVMRFDPVGTLMFMPAIICVLLALQWGGTTHAWNSGIVVALLVVGGVLVIAFGIVQWLMHDDATIPLRIIKKRTIWACAAYQFALGAAFFVFIYFLPIWFQGVQGASAIQSGVRTLPMLVGNIVATAVSGVLVTIIGYYAPFMILGTILASVGAGLLLLFTPNVTAASWIGYQAIVGLGIGFGWQQPFVAVQTVLDIKDVPIATATLSFAQTLGGTLFVSVAQTAFSTKLTQELVSQVPQLDPASILHEGGAAELDKLVPEQYLPDVVLSYNNSLLSAFFVATIMAIMSLVGCTFVEWNSVKGKKADAVPAA.

Residues methionine 1 to threonine 17 show a composition bias toward low complexity. A disordered region spans residues methionine 1 to threonine 49. Positions cysteine 19–glutamate 47 are enriched in basic and acidic residues. 10 helical membrane passes run alanine 66–proline 86, tryptophan 127–proline 147, isoleucine 158–valine 178, leucine 185–glycine 205, tryptophan 216–phenylalanine 236, valine 260–glycine 280, serine 287–valine 307, phenylalanine 335–valine 355, leucine 368–isoleucine 388, and alanine 392–phenylalanine 412. Asparagine 415 is a glycosylation site (N-linked (GlcNAc...) asparagine). 2 consecutive transmembrane segments (helical) span residues valine 416–tryptophan 436 and isoleucine 454–alanine 474. Asparagine 524 carries N-linked (GlcNAc...) asparagine glycosylation. The chain crosses the membrane as a helical span at residues leucine 528 to valine 548.

The protein belongs to the major facilitator superfamily. TCR/Tet family.

The protein resides in the cell membrane. In terms of biological role, efflux pump that may be involved in the secretion of leporins. The chain is Aspyridones efflux protein (TP) from Neocamarosporium betae (Beet black rot fungus).